Here is a 380-residue protein sequence, read N- to C-terminus: MFVRHLTLTDFRSWARADLELEPGRTVFVGPNGFGKTNLVEALWYSATLGSHRVASDAPLIRAGAPRAVVSTIVVNEGRELAVDLEITTGRANKARLNRSPVRSPREVLGVLRAVLFAPEDLALVRGDPGERRRYLDELATTRRPSIAGVRADYDRVIRQRTALLKSAAGARYRGDRSVLETLDVWDGHLAAHGALLMAARADLVHHLAPEVEKAYQLLAPGSRPAAIRYRTSIDAEDDVSAEYYEAALLDAMTRRRDAELERGVCLVGPHRDDLELRLGDQMAKGYASHGESWSMALSLRLAAYELLRTDGSDPVLLLDDVFAELDAARRRALAEVAASAEQVLVTAAVAEDIPADWDARRIVIRMQDDDDGRVSMVES.

An ATP-binding site is contributed by 30–37 (GPNGFGKT).

The protein belongs to the RecF family.

The protein localises to the cytoplasm. In terms of biological role, the RecF protein is involved in DNA metabolism; it is required for DNA replication and normal SOS inducibility. RecF binds preferentially to single-stranded, linear DNA. It also seems to bind ATP. In Mycobacterium sp. (strain JLS), this protein is DNA replication and repair protein RecF.